Reading from the N-terminus, the 354-residue chain is Anthranilate phosphoribosyltransferase (354 aa).

5-phospho-alpha-D-ribose 1-diphosphate is bound by residues Gly-94, 97–98, Thr-102, 104–107, 122–130, and Ser-134; these read GD, NIST, and KHGNRAASS. Residue Gly-94 coordinates anthranilate. Residue Ser-106 coordinates Mg(2+). Asn-125 provides a ligand contact to anthranilate. Residue Arg-180 coordinates anthranilate. Residues Asp-238 and Glu-239 each coordinate Mg(2+).

It belongs to the anthranilate phosphoribosyltransferase family. In terms of assembly, homodimer. Mg(2+) serves as cofactor.

The catalysed reaction is N-(5-phospho-beta-D-ribosyl)anthranilate + diphosphate = 5-phospho-alpha-D-ribose 1-diphosphate + anthranilate. It functions in the pathway amino-acid biosynthesis; L-tryptophan biosynthesis; L-tryptophan from chorismate: step 2/5. Catalyzes the transfer of the phosphoribosyl group of 5-phosphorylribose-1-pyrophosphate (PRPP) to anthranilate to yield N-(5'-phosphoribosyl)-anthranilate (PRA). The sequence is that of Anthranilate phosphoribosyltransferase from Streptomyces griseus subsp. griseus (strain JCM 4626 / CBS 651.72 / NBRC 13350 / KCC S-0626 / ISP 5235).